A 119-amino-acid polypeptide reads, in one-letter code: Small ribosomal subunit protein uS13m (119 aa).

The protein belongs to the universal ribosomal protein uS13 family. In terms of assembly, part of the small ribosomal subunit.

It is found in the mitochondrion. In terms of biological role, located at the top of the head of the small subunit, it contacts several helices of the small subunit rRNA. The sequence is that of Small ribosomal subunit protein uS13m (RPS13) from Prototheca wickerhamii.